The following is a 131-amino-acid chain: Large ribosomal subunit protein bL17 (131 aa).

This sequence belongs to the bacterial ribosomal protein bL17 family. Part of the 50S ribosomal subunit. Contacts protein L32.

This is Large ribosomal subunit protein bL17 from Burkholderia mallei (strain NCTC 10229).